Here is a 538-residue protein sequence, read N- to C-terminus: Bifunctional purine biosynthesis protein PurH (538 aa).

The MGS-like domain maps to 6-158; it reads KHIPAPDLHR…KNHAYVATVV (153 aa).

The protein belongs to the PurH family.

The enzyme catalyses (6R)-10-formyltetrahydrofolate + 5-amino-1-(5-phospho-beta-D-ribosyl)imidazole-4-carboxamide = 5-formamido-1-(5-phospho-D-ribosyl)imidazole-4-carboxamide + (6S)-5,6,7,8-tetrahydrofolate. It carries out the reaction IMP + H2O = 5-formamido-1-(5-phospho-D-ribosyl)imidazole-4-carboxamide. The protein operates within purine metabolism; IMP biosynthesis via de novo pathway; 5-formamido-1-(5-phospho-D-ribosyl)imidazole-4-carboxamide from 5-amino-1-(5-phospho-D-ribosyl)imidazole-4-carboxamide (10-formyl THF route): step 1/1. Its pathway is purine metabolism; IMP biosynthesis via de novo pathway; IMP from 5-formamido-1-(5-phospho-D-ribosyl)imidazole-4-carboxamide: step 1/1. This chain is Bifunctional purine biosynthesis protein PurH, found in Brucella ovis (strain ATCC 25840 / 63/290 / NCTC 10512).